Consider the following 744-residue polypeptide: NAD(P)H-quinone oxidoreductase subunit 5, chloroplastic (744 aa).

The next 16 membrane-spanning stretches (helical) occupy residues tryptophan 9–phenylalanine 29, tryptophan 40–isoleucine 60, isoleucine 89–isoleucine 109, phenylalanine 125–isoleucine 145, valine 147–threonine 167, glycine 185–phenylalanine 205, asparagine 219–alanine 239, threonine 258–alanine 278, leucine 280–isoleucine 300, leucine 327–isoleucine 347, alanine 354–serine 374, asparagine 396–serine 416, tryptophan 425–tyrosine 445, leucine 552–phenylalanine 572, phenylalanine 612–phenylalanine 632, and isoleucine 724–isoleucine 744.

Belongs to the complex I subunit 5 family. In terms of assembly, NDH is composed of at least 16 different subunits, 5 of which are encoded in the nucleus.

The protein localises to the plastid. The protein resides in the chloroplast thylakoid membrane. The enzyme catalyses a plastoquinone + NADH + (n+1) H(+)(in) = a plastoquinol + NAD(+) + n H(+)(out). It catalyses the reaction a plastoquinone + NADPH + (n+1) H(+)(in) = a plastoquinol + NADP(+) + n H(+)(out). NDH shuttles electrons from NAD(P)H:plastoquinone, via FMN and iron-sulfur (Fe-S) centers, to quinones in the photosynthetic chain and possibly in a chloroplast respiratory chain. The immediate electron acceptor for the enzyme in this species is believed to be plastoquinone. Couples the redox reaction to proton translocation, and thus conserves the redox energy in a proton gradient. In Cicer arietinum (Chickpea), this protein is NAD(P)H-quinone oxidoreductase subunit 5, chloroplastic (ndhF).